A 144-amino-acid chain; its full sequence is D-aminoacyl-tRNA deacylase (144 aa).

Residues 136–137 carry the Gly-cisPro motif, important for rejection of L-amino acids motif; sequence GP.

The protein belongs to the DTD family. As to quaternary structure, homodimer.

The protein resides in the cytoplasm. It carries out the reaction glycyl-tRNA(Ala) + H2O = tRNA(Ala) + glycine + H(+). It catalyses the reaction a D-aminoacyl-tRNA + H2O = a tRNA + a D-alpha-amino acid + H(+). Its function is as follows. An aminoacyl-tRNA editing enzyme that deacylates mischarged D-aminoacyl-tRNAs. Also deacylates mischarged glycyl-tRNA(Ala), protecting cells against glycine mischarging by AlaRS. Acts via tRNA-based rather than protein-based catalysis; rejects L-amino acids rather than detecting D-amino acids in the active site. By recycling D-aminoacyl-tRNA to D-amino acids and free tRNA molecules, this enzyme counteracts the toxicity associated with the formation of D-aminoacyl-tRNA entities in vivo and helps enforce protein L-homochirality. The protein is D-aminoacyl-tRNA deacylase of Actinobacillus succinogenes (strain ATCC 55618 / DSM 22257 / CCUG 43843 / 130Z).